The chain runs to 208 residues: N-(5'-phosphoribosyl)anthranilate isomerase (208 aa).

Belongs to the TrpF family.

It carries out the reaction N-(5-phospho-beta-D-ribosyl)anthranilate = 1-(2-carboxyphenylamino)-1-deoxy-D-ribulose 5-phosphate. It participates in amino-acid biosynthesis; L-tryptophan biosynthesis; L-tryptophan from chorismate: step 3/5. In Neisseria meningitidis serogroup A / serotype 4A (strain DSM 15465 / Z2491), this protein is N-(5'-phosphoribosyl)anthranilate isomerase.